The sequence spans 156 residues: Small ribosomal subunit protein uS7 (156 aa).

It belongs to the universal ribosomal protein uS7 family. In terms of assembly, part of the 30S ribosomal subunit. Contacts proteins S9 and S11.

One of the primary rRNA binding proteins, it binds directly to 16S rRNA where it nucleates assembly of the head domain of the 30S subunit. Is located at the subunit interface close to the decoding center, probably blocks exit of the E-site tRNA. This Clostridium tetani (strain Massachusetts / E88) protein is Small ribosomal subunit protein uS7.